The chain runs to 1412 residues: DNA-directed RNA polymerase subunit beta' (1412 aa).

Residues Cys70, Cys72, Cys85, and Cys88 each contribute to the Zn(2+) site. Mg(2+)-binding residues include Asp460, Asp462, and Asp464. Zn(2+) contacts are provided by Cys819, Cys893, Cys900, and Cys903. The interval 1391–1412 (AEESFEFGTPETPAAEQQHSGE) is disordered.

Belongs to the RNA polymerase beta' chain family. The RNAP catalytic core consists of 2 alpha, 1 beta, 1 beta' and 1 omega subunit. When a sigma factor is associated with the core the holoenzyme is formed, which can initiate transcription. It depends on Mg(2+) as a cofactor. Zn(2+) serves as cofactor.

The enzyme catalyses RNA(n) + a ribonucleoside 5'-triphosphate = RNA(n+1) + diphosphate. DNA-dependent RNA polymerase catalyzes the transcription of DNA into RNA using the four ribonucleoside triphosphates as substrates. This chain is DNA-directed RNA polymerase subunit beta', found in Paraburkholderia xenovorans (strain LB400).